The chain runs to 492 residues: UDP-N-acetylmuramoyl-L-alanyl-D-glutamate--2,6-diaminopimelate ligase (492 aa).

Ser-21 lines the UDP-N-acetyl-alpha-D-muramoyl-L-alanyl-D-glutamate pocket. Residue Gly-98–Ser-104 participates in ATP binding. Residues Thr-144–Thr-145, Ser-171, Gln-177, and Arg-179 each bind UDP-N-acetyl-alpha-D-muramoyl-L-alanyl-D-glutamate. Lys-211 bears the N6-carboxylysine mark. Residues Arg-372, Asp-396 to Arg-399, Gly-446, and Glu-450 each bind meso-2,6-diaminopimelate. The Meso-diaminopimelate recognition motif signature appears at Asp-396–Arg-399.

This sequence belongs to the MurCDEF family. MurE subfamily. Mg(2+) serves as cofactor. Post-translationally, carboxylation is probably crucial for Mg(2+) binding and, consequently, for the gamma-phosphate positioning of ATP.

The protein resides in the cytoplasm. The enzyme catalyses UDP-N-acetyl-alpha-D-muramoyl-L-alanyl-D-glutamate + meso-2,6-diaminopimelate + ATP = UDP-N-acetyl-alpha-D-muramoyl-L-alanyl-gamma-D-glutamyl-meso-2,6-diaminopimelate + ADP + phosphate + H(+). It participates in cell wall biogenesis; peptidoglycan biosynthesis. Catalyzes the addition of meso-diaminopimelic acid to the nucleotide precursor UDP-N-acetylmuramoyl-L-alanyl-D-glutamate (UMAG) in the biosynthesis of bacterial cell-wall peptidoglycan. The polypeptide is UDP-N-acetylmuramoyl-L-alanyl-D-glutamate--2,6-diaminopimelate ligase (Rickettsia typhi (strain ATCC VR-144 / Wilmington)).